Here is a 353-residue protein sequence, read N- to C-terminus: Photosystem II protein D1 (353 aa).

T2 is modified (N-acetylthreonine). T2 is modified (phosphothreonine). A run of 3 helical transmembrane segments spans residues Y29–S46, H118–L133, and W142–A156. H118 contacts chlorophyll a. Y126 serves as a coordination point for pheophytin a. [CaMn4O5] cluster contacts are provided by D170 and E189. A helical transmembrane segment spans residues F197–L218. Residue H198 participates in chlorophyll a binding. Residues H215 and S264–F265 each bind a quinone. H215 provides a ligand contact to Fe cation. Position 272 (H272) interacts with Fe cation. Residues F274–L288 traverse the membrane as a helical segment. [CaMn4O5] cluster-binding residues include H332, E333, D342, and A344. The propeptide occupies A345–G353.

The protein belongs to the reaction center PufL/M/PsbA/D family. As to quaternary structure, PSII is composed of 1 copy each of membrane proteins PsbA, PsbB, PsbC, PsbD, PsbE, PsbF, PsbH, PsbI, PsbJ, PsbK, PsbL, PsbM, PsbT, PsbX, PsbY, PsbZ, Psb30/Ycf12, at least 3 peripheral proteins of the oxygen-evolving complex and a large number of cofactors. It forms dimeric complexes. The cofactor is The D1/D2 heterodimer binds P680, chlorophylls that are the primary electron donor of PSII, and subsequent electron acceptors. It shares a non-heme iron and each subunit binds pheophytin, quinone, additional chlorophylls, carotenoids and lipids. D1 provides most of the ligands for the Mn4-Ca-O5 cluster of the oxygen-evolving complex (OEC). There is also a Cl(-1) ion associated with D1 and D2, which is required for oxygen evolution. The PSII complex binds additional chlorophylls, carotenoids and specific lipids.. Post-translationally, tyr-161 forms a radical intermediate that is referred to as redox-active TyrZ, YZ or Y-Z. C-terminally processed by CTPA; processing is essential to allow assembly of the oxygen-evolving complex and thus photosynthetic growth.

Its subcellular location is the plastid. The protein localises to the chloroplast thylakoid membrane. It carries out the reaction 2 a plastoquinone + 4 hnu + 2 H2O = 2 a plastoquinol + O2. In terms of biological role, photosystem II (PSII) is a light-driven water:plastoquinone oxidoreductase that uses light energy to abstract electrons from H(2)O, generating O(2) and a proton gradient subsequently used for ATP formation. It consists of a core antenna complex that captures photons, and an electron transfer chain that converts photonic excitation into a charge separation. The D1/D2 (PsbA/PsbD) reaction center heterodimer binds P680, the primary electron donor of PSII as well as several subsequent electron acceptors. In Oenothera parviflora (Small-flowered evening primrose), this protein is Photosystem II protein D1.